Consider the following 40-residue polypeptide: Photosystem II reaction center protein L (40 aa).

Residues 19-39 (SLFLGLLLVFVLGILFSSYFF) form a helical membrane-spanning segment.

Belongs to the PsbL family. PSII is composed of 1 copy each of membrane proteins PsbA, PsbB, PsbC, PsbD, PsbE, PsbF, PsbH, PsbI, PsbJ, PsbK, PsbL, PsbM, PsbT, PsbX, PsbY, PsbZ, Psb30/Ycf12, peripheral proteins PsbO, CyanoQ (PsbQ), PsbU, PsbV and a large number of cofactors. It forms dimeric complexes.

It localises to the cellular thylakoid membrane. Functionally, one of the components of the core complex of photosystem II (PSII). PSII is a light-driven water:plastoquinone oxidoreductase that uses light energy to abstract electrons from H(2)O, generating O(2) and a proton gradient subsequently used for ATP formation. It consists of a core antenna complex that captures photons, and an electron transfer chain that converts photonic excitation into a charge separation. This subunit is found at the monomer-monomer interface and is required for correct PSII assembly and/or dimerization. The polypeptide is Photosystem II reaction center protein L (Synechococcus elongatus (strain ATCC 33912 / PCC 7942 / FACHB-805) (Anacystis nidulans R2)).